A 145-amino-acid chain; its full sequence is Protein FAM216B (145 aa).

The disordered stretch occupies residues threonine 92 to proline 121.

Belongs to the FAM216 family.

The polypeptide is Protein FAM216B (FAM216B) (Bos taurus (Bovine)).